Here is a 140-residue protein sequence, read N- to C-terminus: Transcription antitermination protein NusB (140 aa).

This sequence belongs to the NusB family.

Involved in transcription antitermination. Required for transcription of ribosomal RNA (rRNA) genes. Binds specifically to the boxA antiterminator sequence of the ribosomal RNA (rrn) operons. The protein is Transcription antitermination protein NusB of Streptococcus pneumoniae (strain 70585).